The chain runs to 209 residues: Prolactin (209 aa).

An N-terminal signal peptide occupies residues 1–24 (MAQRFKGRSLFLTALLCLASQGYA). 2 disulfides stabilise this stretch: Cys-70-Cys-184 and Cys-201-Cys-209.

This sequence belongs to the somatotropin/prolactin family.

It localises to the secreted. The polypeptide is Prolactin (prl) (Anguilla anguilla (European freshwater eel)).